Consider the following 316-residue polypeptide: Adenine deaminase (316 aa).

Residues His-14, His-16, and His-194 each coordinate Zn(2+). Residue Glu-197 is the Proton donor of the active site. Position 275 (Asp-275) interacts with Zn(2+). Asp-276 serves as a coordination point for substrate.

It belongs to the metallo-dependent hydrolases superfamily. Adenosine and AMP deaminases family. Adenine deaminase type 2 subfamily. Zn(2+) serves as cofactor.

It catalyses the reaction adenine + H2O + H(+) = hypoxanthine + NH4(+). Functionally, catalyzes the hydrolytic deamination of adenine to hypoxanthine. Plays an important role in the purine salvage pathway and in nitrogen catabolism. The protein is Adenine deaminase of Pseudomonas aeruginosa (strain UCBPP-PA14).